We begin with the raw amino-acid sequence, 118 residues long: MISKPDKNKLRLKRHRRIRGKISGTAERPRLSIFRSNKNIYAQLIDDVAGVTLASASTLDENVSDATKLEQAAAVGKAIAEAAKAKNISTVVFDRSGYLYHGRIQALADAARENGLDF.

It belongs to the universal ribosomal protein uL18 family. Part of the 50S ribosomal subunit; part of the 5S rRNA/L5/L18/L25 subcomplex. Contacts the 5S and 23S rRNAs.

In terms of biological role, this is one of the proteins that bind and probably mediate the attachment of the 5S RNA into the large ribosomal subunit, where it forms part of the central protuberance. The chain is Large ribosomal subunit protein uL18 from Lactobacillus acidophilus (strain ATCC 700396 / NCK56 / N2 / NCFM).